A 99-amino-acid polypeptide reads, in one-letter code: Protein Tat (99 aa).

The tract at residues 1–20 is disordered; sequence MELVDPNLDPWNHPGSQPTT. The tract at residues 1-24 is interaction with human CREBBP; the sequence is MELVDPNLDPWNHPGSQPTTPCTR. Residues 1–48 are transactivation; sequence MELVDPNLDPWNHPGSQPTTPCTRCYCKWCCFHCYWCFTTKGLGISYG. Zn(2+)-binding residues include Cys-22, Cys-25, and Cys-27. The tract at residues 22–37 is cysteine-rich; sequence CTRCYCKWCCFHCYWC. Lys-28 is subject to N6-acetyllysine; by host PCAF. 4 residues coordinate Zn(2+): Cys-30, His-33, Cys-34, and Cys-37. The interval 38–48 is core; sequence FTTKGLGISYG. The interval 48–99 is disordered; the sequence is GRKKRRQRPRTPQSSQIHQDFVPKQPISQARGNPTGPKESKKEVESKAKTDP. Positions 49–57 match the Nuclear localization signal, RNA-binding (TAR), and protein transduction motif; that stretch reads RKKRRQRPR. The segment at 49-86 is interaction with the host capping enzyme RNGTT; sequence RKKRRQRPRTPQSSQIHQDFVPKQPISQARGNPTGPKE. 2 positions are modified to N6-acetyllysine; by host EP300 and GCN5L2: Lys-50 and Lys-51. Asymmetric dimethylarginine; by host PRMT6 is present on residues Arg-52 and Arg-53. A Glycyl lysine isopeptide (Lys-Gly) (interchain with G-Cter in ubiquitin) cross-link involves residue Lys-71. Residues 85 to 99 are compositionally biased toward basic and acidic residues; it reads KESKKEVESKAKTDP.

This sequence belongs to the lentiviruses Tat family. Interacts with host CCNT1. Associates with the P-TEFb complex composed at least of Tat, P-TEFb (CDK9 and CCNT1), TAR RNA, RNA Pol II. Recruits the HATs CREBBP, TAF1/TFIID, EP300, PCAF and GCN5L2. Interacts with host KAT5/Tip60; this interaction targets the latter to degradation. Interacts with the host deacetylase SIRT1. Interacts with host capping enzyme RNGTT; this interaction stimulates RNGTT. Binds to host KDR, and to the host integrins ITGAV/ITGB3 and ITGA5/ITGB1. Interacts with host KPNB1/importin beta-1 without previous binding to KPNA1/importin alpha-1. Interacts with EIF2AK2. Interacts with host nucleosome assembly protein NAP1L1; this interaction may be required for the transport of Tat within the nucleus, since the two proteins interact at the nuclear rim. Interacts with host C1QBP/SF2P32; this interaction involves lysine-acetylated Tat. Interacts with the host chemokine receptors CCR2, CCR3 and CXCR4. Interacts with host DPP4/CD26; this interaction may trigger an anti-proliferative effect. Interacts with host LDLR. Interacts with the host extracellular matrix metalloproteinase MMP1. Interacts with host PRMT6; this interaction mediates Tat's methylation. Interacts with, and is ubiquitinated by MDM2/Hdm2. Interacts with host PSMC3 and HTATIP2. Interacts with STAB1; this interaction may overcome SATB1-mediated repression of IL2 and IL2RA (interleukin) in T cells by binding to the same domain than HDAC1. Interacts (when acetylated) with human CDK13, thereby increasing HIV-1 mRNA splicing and promoting the production of the doubly spliced HIV-1 protein Nef. Interacts with host TBP; this interaction modulates the activity of transcriptional pre-initiation complex. Interacts with host RELA. Interacts with host PLSCR1; this interaction negatively regulates Tat transactivation activity by altering its subcellular distribution. In terms of processing, asymmetrical arginine methylation by host PRMT6 seems to diminish the transactivation capacity of Tat and affects the interaction with host CCNT1. Post-translationally, acetylation by EP300, CREBBP, GCN5L2/GCN5 and PCAF regulates the transactivation activity of Tat. EP300-mediated acetylation of Lys-50 promotes dissociation of Tat from the TAR RNA through the competitive binding to PCAF's bromodomain. In addition, the non-acetylated Tat's N-terminus can also interact with PCAF. PCAF-mediated acetylation of Lys-28 enhances Tat's binding to CCNT1. Lys-50 is deacetylated by SIRT1. Polyubiquitination by host MDM2 does not target Tat to degradation, but activates its transactivation function and fosters interaction with CCNT1 and TAR RNA. In terms of processing, phosphorylated by EIF2AK2 on serine and threonine residues adjacent to the basic region important for TAR RNA binding and function. Phosphorylation of Tat by EIF2AK2 is dependent on the prior activation of EIF2AK2 by dsRNA.

Its subcellular location is the host nucleus. The protein localises to the host nucleolus. It is found in the host cytoplasm. The protein resides in the secreted. In terms of biological role, transcriptional activator that increases RNA Pol II processivity, thereby increasing the level of full-length viral transcripts. Recognizes a hairpin structure at the 5'-LTR of the nascent viral mRNAs referred to as the transactivation responsive RNA element (TAR) and recruits the cyclin T1-CDK9 complex (P-TEFb complex) that will in turn hyperphosphorylate the RNA polymerase II to allow efficient elongation. The CDK9 component of P-TEFb and other Tat-activated kinases hyperphosphorylate the C-terminus of RNA Pol II that becomes stabilized and much more processive. Other factors such as HTATSF1/Tat-SF1, SUPT5H/SPT5, and HTATIP2 are also important for Tat's function. Besides its effect on RNA Pol II processivity, Tat induces chromatin remodeling of proviral genes by recruiting the histone acetyltransferases (HATs) CREBBP, EP300 and PCAF to the chromatin. This also contributes to the increase in proviral transcription rate, especially when the provirus integrates in transcriptionally silent region of the host genome. To ensure maximal activation of the LTR, Tat mediates nuclear translocation of NF-kappa-B by interacting with host RELA. Through its interaction with host TBP, Tat may also modulate transcription initiation. Tat can reactivate a latently infected cell by penetrating in it and transactivating its LTR promoter. In the cytoplasm, Tat is thought to act as a translational activator of HIV-1 mRNAs. Its function is as follows. Extracellular circulating Tat can be endocytosed by surrounding uninfected cells via the binding to several surface receptors such as CD26, CXCR4, heparan sulfate proteoglycans (HSPG) or LDLR. Neurons are rarely infected, but they internalize Tat via their LDLR. Through its interaction with nuclear HATs, Tat is potentially able to control the acetylation-dependent cellular gene expression. Modulates the expression of many cellular genes involved in cell survival, proliferation or in coding for cytokines or cytokine receptors. Tat plays a role in T-cell and neurons apoptosis. Tat induced neurotoxicity and apoptosis probably contribute to neuroAIDS. Circulating Tat also acts as a chemokine-like and/or growth factor-like molecule that binds to specific receptors on the surface of the cells, affecting many cellular pathways. In the vascular system, Tat binds to ITGAV/ITGB3 and ITGA5/ITGB1 integrins dimers at the surface of endothelial cells and competes with bFGF for heparin-binding sites, leading to an excess of soluble bFGF. The chain is Protein Tat from Homo sapiens (Human).